Reading from the N-terminus, the 321-residue chain is Fibronectin type III domain-containing protein 8 (321 aa).

Residues 175-277 enclose the Fibronectin type-III domain; that stretch reads VPEVPFICEH…KPYKFATVST (103 aa).

The sequence is that of Fibronectin type III domain-containing protein 8 (Fndc8) from Mus musculus (Mouse).